A 477-amino-acid chain; its full sequence is Argininosuccinate lyase (477 aa).

The protein belongs to the lyase 1 family. Argininosuccinate lyase subfamily.

The protein localises to the cytoplasm. It carries out the reaction 2-(N(omega)-L-arginino)succinate = fumarate + L-arginine. Its pathway is amino-acid biosynthesis; L-arginine biosynthesis; L-arginine from L-ornithine and carbamoyl phosphate: step 3/3. This Acinetobacter baumannii (strain AB307-0294) protein is Argininosuccinate lyase.